The sequence spans 401 residues: Putative phosphatidylinositol 4-phosphate 5-kinase 11 (401 aa).

The region spanning 1–390 (MELRATVENR…RFQDFVSNIF (390 aa)) is the PIPK domain. Positions 242 to 260 (SFKSNSTKSMKTASSSPDR) are enriched in polar residues. The segment at 242–268 (SFKSNSTKSMKTASSSPDRSSVAMYSC) is disordered. Positions 350–371 (YGMKKRIEHCYKSIQYNSNSIS) are activation loop.

The catalysed reaction is a 1,2-diacyl-sn-glycero-3-phospho-(1D-myo-inositol 4-phosphate) + ATP = a 1,2-diacyl-sn-glycero-3-phospho-(1D-myo-inositol-4,5-bisphosphate) + ADP + H(+). The polypeptide is Putative phosphatidylinositol 4-phosphate 5-kinase 11 (PIP5K11) (Arabidopsis thaliana (Mouse-ear cress)).